The primary structure comprises 524 residues: Na(+)/H(+) antiporter NhaB (524 aa).

A run of 9 helical transmembrane segments spans residues Phe-13–Pro-33, Leu-98–Phe-118, Ala-140–Val-160, Phe-239–Leu-259, Ala-304–Val-324, Gly-325–Gly-345, Leu-358–Ile-378, Ala-448–Ile-468, and Ala-479–Val-499.

It belongs to the NhaB Na(+)/H(+) (TC 2.A.34) antiporter family.

Its subcellular location is the cell inner membrane. The catalysed reaction is 2 Na(+)(in) + 3 H(+)(out) = 2 Na(+)(out) + 3 H(+)(in). Its function is as follows. Na(+)/H(+) antiporter that extrudes sodium in exchange for external protons. This is Na(+)/H(+) antiporter NhaB from Yersinia pseudotuberculosis serotype O:3 (strain YPIII).